The chain runs to 586 residues: Probable zinc metalloprotease EGY3, chloroplastic (586 aa).

Residues 1–54 constitute a chloroplast transit peptide; the sequence is MSSSSLVTSLLFSSSSSSNTATSTSSRRSFSLFSKNQYCKPSPLRRSSSLLLVR. Positions 62–73 are enriched in basic and acidic residues; sequence EEKAAPAAESHH. A disordered region spans residues 62–118; that stretch reads EEKAAPAAESHHAGGGQDDAATASHHAVEGENGVADADGGGVKKSKEELEEEEQQEV. A coiled-coil region spans residues 103–195; sequence VKKSKEELEE…NTFKALDLNK (93 aa). The next 7 helical transmembrane spans lie at 287-307, 318-338, 389-409, 427-447, 454-474, 506-526, and 550-570; these read LSAVALAVTTFGTIAIMSGFF, VSDVLPLFAGFLSILGVSEIA, ASAYLTSVALAVSAFVSDGSL, PLLSFVQAVIGPYADELGNVL, VGVPVDPLAFAGLLGIVVTSL, VALGAGAIIGGSVLCLAWGLF, and YAWGLVLAVVCLLTLFPNGGG.

This sequence belongs to the peptidase M50B family.

Its subcellular location is the plastid. It localises to the chloroplast membrane. In terms of biological role, probable membrane-associated metalloprotease that may be involved in chloroplast development. The chain is Probable zinc metalloprotease EGY3, chloroplastic (EGY3) from Oryza sativa subsp. indica (Rice).